The following is a 245-amino-acid chain: Ubiquinone biosynthesis O-methyltransferase (245 aa).

4 residues coordinate S-adenosyl-L-methionine: Arg-44, Gly-64, Asp-85, and Met-129.

This sequence belongs to the methyltransferase superfamily. UbiG/COQ3 family.

The catalysed reaction is a 3-demethylubiquinol + S-adenosyl-L-methionine = a ubiquinol + S-adenosyl-L-homocysteine + H(+). The enzyme catalyses a 3-(all-trans-polyprenyl)benzene-1,2-diol + S-adenosyl-L-methionine = a 2-methoxy-6-(all-trans-polyprenyl)phenol + S-adenosyl-L-homocysteine + H(+). It functions in the pathway cofactor biosynthesis; ubiquinone biosynthesis. Functionally, O-methyltransferase that catalyzes the 2 O-methylation steps in the ubiquinone biosynthetic pathway. In Proteus mirabilis (strain HI4320), this protein is Ubiquinone biosynthesis O-methyltransferase.